A 426-amino-acid polypeptide reads, in one-letter code: Glutamate-1-semialdehyde 2,1-aminomutase (426 aa).

The residue at position 265 (lysine 265) is an N6-(pyridoxal phosphate)lysine.

This sequence belongs to the class-III pyridoxal-phosphate-dependent aminotransferase family. HemL subfamily. Homodimer. Requires pyridoxal 5'-phosphate as cofactor.

It is found in the cytoplasm. The enzyme catalyses (S)-4-amino-5-oxopentanoate = 5-aminolevulinate. Its pathway is porphyrin-containing compound metabolism; protoporphyrin-IX biosynthesis; 5-aminolevulinate from L-glutamyl-tRNA(Glu): step 2/2. The sequence is that of Glutamate-1-semialdehyde 2,1-aminomutase from Escherichia coli O157:H7.